A 296-amino-acid chain; its full sequence is Diaminopimelate epimerase (296 aa).

Substrate-binding residues include Asn-11 and Asn-78. Cys-87 (proton donor) is an active-site residue. Substrate is bound by residues 88–89 (GN), Asn-167, Asn-203, and 221–222 (ER). Catalysis depends on Cys-230, which acts as the Proton acceptor. Substrate is bound at residue 231–232 (GT).

This sequence belongs to the diaminopimelate epimerase family. In terms of assembly, homodimer.

It is found in the cytoplasm. It carries out the reaction (2S,6S)-2,6-diaminopimelate = meso-2,6-diaminopimelate. It functions in the pathway amino-acid biosynthesis; L-lysine biosynthesis via DAP pathway; DL-2,6-diaminopimelate from LL-2,6-diaminopimelate: step 1/1. Functionally, catalyzes the stereoinversion of LL-2,6-diaminopimelate (L,L-DAP) to meso-diaminopimelate (meso-DAP), a precursor of L-lysine and an essential component of the bacterial peptidoglycan. The chain is Diaminopimelate epimerase from Mycobacterium leprae (strain Br4923).